The chain runs to 1238 residues: Anion exchange protein 2 (1238 aa).

Positions 1 to 238 are disordered; it reads MSGTPRRPAS…YNLQERRRIG (238 aa). Residues 1-704 are Cytoplasmic-facing; sequence MSGTPRRPAS…SDFRDALDPQ (704 aa). Composition is skewed to basic and acidic residues over residues 37–49 and 58–75; these read DLHRTLGVERFEE and GGEELGRSYGEEDFEYHR. Composition is skewed to basic residues over residues 76-85 and 94-110; these read QSSHHIHHPL and RRRKTPQGQVRKPRRRP. The segment covering 120–133 has biased composition (acidic residues); that stretch reads TIEEGEEDEDETSE. 4 positions are modified to phosphoserine: Ser132, Ser144, Ser170, and Ser172. A compositionally biased stretch (polar residues) spans 141–154; that stretch reads TDPSPASTPTSVQF. A compositionally biased stretch (gly residues) spans 205–215; it reads GTAGGDDGGAS. Phosphoserine is present on Ser239. Thr253 carries the phosphothreonine modification. N6-methyllysine is present on Lys270. Residues 277-315 form a disordered region; the sequence is VPGVRRHLVRKNAKGSSQSSREGREPGPTPRTRPRAPHK. Basic residues predominate over residues 280 to 289; the sequence is VRRHLVRKNA. At Ser439 the chain carries Phosphoserine. The disordered stretch occupies residues 445-466; it reads SLLGHHHTQGAESDPHVTEPLI. The next 4 membrane-spanning stretches (helical) occupy residues 705 to 728, 734 to 771, 791 to 813, and 823 to 844; these read CLAAVIFIYFAALSPAITFGGLLG, LIGVSELIMSTALQGVTFCLLGAQPLLVIGFSGPLLVF, VWIGFWLVLSALLMVALEGSFLV, and IFAFLISLIFIYETFYKLVKIF. The membrane (anion exchange) stretch occupies residues 705 to 1238; sequence CLAAVIFIYF…DEYNEMPMPV (534 aa). Residues 845-897 are Extracellular-facing; it reads QEHPLHGCLASNSSEADGGKNTTWTEAAPTPGHGNTSSAEQAGVERPQGQPNT. Asn856, Asn865, and Asn879 each carry an N-linked (GlcNAc...) asparagine glycan. Residues 858–869 are compositionally biased toward polar residues; that stretch reads SEADGGKNTTWT. The disordered stretch occupies residues 858-892; it reads SEADGGKNTTWTEAAPTPGHGNTSSAEQAGVERPQ. A helical membrane pass occupies residues 898 to 915; sequence ALLSLVLMAGTFFIAFFL. Topologically, residues 916–930 are cytoplasmic; that stretch reads RKFKNSRFFPGRIRR. Helical transmembrane passes span 931–951, 985–1007, 1033–1054, 1088–1133, and 1160–1196; these read VIGDFGVPIAILIMVLVDYSI, PFPVWMMVASLLPAILVFILIFM, LLLIVAMGGICALFGLLWLAAA, VTGL…IQFY, and MHLFKALQLLCLALLWAVMSTAASLAFPFILILTVPL. Cys1170 carries S-palmitoyl cysteine lipidation.

Belongs to the anion exchanger (TC 2.A.31) family. Expressed in the cochlea (at protein level).

It localises to the apical cell membrane. The protein resides in the basolateral cell membrane. The catalysed reaction is hydrogencarbonate(in) + chloride(out) = hydrogencarbonate(out) + chloride(in). Sodium-independent anion exchanger which mediates the electroneutral exchange of chloride for bicarbonate ions across the cell membrane. Plays an important role in osteoclast differentiation and function. Regulates bone resorption and calpain-dependent actin cytoskeleton organization in osteoclasts via anion exchange-dependent control of pH. Essential for intracellular pH regulation in CD8(+) T-cells upon CD3 stimulation, modulating CD8(+) T-cell response. The chain is Anion exchange protein 2 (SLC4A2) from Cavia porcellus (Guinea pig).